Here is a 1616-residue protein sequence, read N- to C-terminus: Protein Shroom2 (1616 aa).

One can recognise a PDZ domain in the interval 26-108; sequence LVEVQLSGGA…TLKLVVKRRS (83 aa). Disordered stretches follow at residues 128-159 and 183-229; these read ELAA…LSSS and HPSS…KADT. Residues 150–159 show a composition bias toward low complexity; that stretch reads SSSSHDLSSS. Polar residues-rich tracts occupy residues 186–197 and 220–229; these read SRLSVAKSNSSI and PDHTLSKADT. The residue at position 231 (Ser-231) is a Phosphoserine. Positions 247–259 are enriched in low complexity; it reads QGGRQAQAAGDPQ. Disordered stretches follow at residues 247 to 475, 502 to 678, 695 to 790, 802 to 869, 881 to 1100, 1115 to 1184, 1268 to 1302, and 1363 to 1389; these read QGGR…SGWQ, GALE…PLAG, TSFK…SEDT, EETS…LPRR, KEQR…PSPA, PSVF…LTDK, AEPE…PGLS, and QRRK…VPAA. The segment covering 312 to 321 has biased composition (pro residues); sequence SSPPPPPPPL. Phosphoserine occurs at positions 313 and 325. The span at 343-356 shows a compositional bias: low complexity; that stretch reads AAAAQHFTALAQAQ. Positions 358–370 are enriched in basic and acidic residues; it reads RGDRRPELTDRPW. A compositionally biased stretch (low complexity) spans 405–415; the sequence is SSRLQASLSSS. Ser-413 carries the phosphoserine modification. The ASD1 domain maps to 684-773; that stretch reads LKEAQARVLR…SEPEKMNEVG (90 aa). 2 stretches are compositionally biased toward basic and acidic residues: residues 754–770 and 821–830; these read FTAE…EKMN and IPRDKPERPR. Residues 842–854 show a composition bias toward polar residues; the sequence is WSRTTSLGDSLNA. Phosphoserine is present on residues Ser-851, Ser-897, Ser-921, Ser-922, and Ser-924. Thr-925 is subject to Phosphothreonine. Over residues 926 to 958 the composition is skewed to basic and acidic residues; sequence DHYKQEASVELRRQAGDPGEPREELPSAVRAEE. At Ser-974 the chain carries Phosphoserine. Polar residues predominate over residues 975 to 994; that stretch reads PGSQQHPPSQKAPNPPTFSE. Ser-1036 and Ser-1039 each carry phosphoserine. Positions 1068–1077 are enriched in basic and acidic residues; it reads PKREPRRYRA. Residues 1159 to 1176 show a composition bias toward polar residues; sequence LRLQTATMETSRSPSPQF. 3 positions are modified to phosphoserine: Ser-1171, Ser-1173, and Ser-1297. An ASD2 domain is found at 1317–1611; the sequence is EELAREIVGK…QLKCLLDSLQ (295 aa).

This sequence belongs to the shroom family. As to quaternary structure, interacts with F-actin. As to expression, abundant in retina and melanoma; also in brain, placenta, lung, kidney and pancreas.

It is found in the apical cell membrane. Its subcellular location is the cell junction. The protein resides in the tight junction. The protein localises to the cytoplasm. It localises to the cytoskeleton. May be involved in endothelial cell morphology changes during cell spreading. In the retinal pigment epithelium, may regulate the biogenesis of melanosomes and promote their association with the apical cell surface by inducing gamma-tubulin redistribution. This Homo sapiens (Human) protein is Protein Shroom2 (SHROOM2).